The chain runs to 554 residues: Phosphomannomutase (554 aa).

Serine 149 functions as the Phosphoserine intermediate in the catalytic mechanism. Serine 149, aspartate 301, aspartate 303, and aspartate 305 together coordinate Mg(2+).

This sequence belongs to the phosphohexose mutase family. It depends on Mg(2+) as a cofactor.

The catalysed reaction is alpha-D-mannose 1-phosphate = D-mannose 6-phosphate. In Mycoplasma pneumoniae (strain ATCC 29342 / M129 / Subtype 1) (Mycoplasmoides pneumoniae), this protein is Phosphomannomutase (manB).